The primary structure comprises 213 residues: Protein Nef (213 aa).

Gly-2 carries the N-myristoyl glycine; by host lipid modification. The interval 68–71 (QEEE) is acidic; interacts with host PACS1 and PACS2; stabilizes the interaction of NEF/MHC-I with host AP1M1; necessary for MHC-I internalization. The tract at residues 75–84 (PVAPQVPLRP) is SH3-binding; interaction with Src family tyrosine kinases. The short motif at 78 to 81 (PQVP) is the PxxP; stabilizes the interaction of NEF/MHC-I with host AP1M1; necessary for MHC-I internalization element. Residues 114 to 130 (EILDLWVYNTQGFFPDW) form a mediates dimerization, Nef-PTE1 interaction region. The segment at 154 to 187 (VSEEEAERLGNTCERANLLHPACAHGFEDTHKEI) is binding to ATP6V1H. Residues 171–172 (LL) carry the Dileucine internalization motif; necessary for CD4 internalization motif. Positions 181-182 (ED) match the Diacidic; necessary for CD4 internalization motif.

This sequence belongs to the lentivirus primate group Nef protein family. As to quaternary structure, monomer; cytosolic form. Homodimer; membrane bound form. Interacts with Nef associated p21-activated kinase (PAK2); this interaction activates PAK2. Associates with the Nef-MHC-I-AP1 complex; this complex is required for MHC-I internalization. Interacts (via C-terminus) with host PI3-kinase. Interacts with host PACS1; this interaction seems to be weak. Interacts with host PACS2. Interacts with host LCK and MAPK3; these interactions inhibit the kinase activity of the latter. Interacts with host ATP6V1H; this interaction may play a role in CD4 endocytosis. Associates with the CD4-Nef-AP2 complex; this complex is required for CD4 internalization. Interacts with host AP2 subunit alpha and AP2 subunit sigma2. Interacts with TCR-zeta chain; this interaction up-regulates the Fas ligand (FasL) surface expression. Interacts with host HCK, LYN, and SRC; these interactions activate the Src family kinases. Interacts with MAP3K5; this interaction inhibits the Fas and TNFR-mediated death signals. Interacts with beta-COP and PTE1. Interacts with human RACK1; this increases Nef phosphorylation by PKC. Interacts with TP53; this interaction decreases the half-life of TP53, protecting the infected cell against p53-mediated apoptosis. The virion-associated Nef proteins are cleaved by the viral protease to release the soluble C-terminal core protein. Nef is probably cleaved concomitantly with viral structural proteins on maturation of virus particles. In terms of processing, myristoylated. Post-translationally, phosphorylated on serine residues, probably by host PKCdelta and theta.

It localises to the host cell membrane. The protein resides in the virion. The protein localises to the secreted. Its subcellular location is the host Golgi apparatus membrane. Its function is as follows. Factor of infectivity and pathogenicity, required for optimal virus replication. Alters numerous pathways of T-lymphocyte function and down-regulates immunity surface molecules in order to evade host defense and increase viral infectivity. Alters the functionality of other immunity cells, like dendritic cells, monocytes/macrophages and NK cells. In terms of biological role, in infected CD4(+) T-lymphocytes, down-regulates the surface MHC-I, mature MHC-II, CD4, CD28, CCR5 and CXCR4 molecules. Mediates internalization and degradation of host CD4 through the interaction of with the cytoplasmic tail of CD4, the recruitment of AP-2 (clathrin adapter protein complex 2), internalization through clathrin coated pits, and subsequent transport to endosomes and lysosomes for degradation. Diverts host MHC-I molecules to the trans-Golgi network-associated endosomal compartments by an endocytic pathway to finally target them for degradation. MHC-I down-regulation may involve AP-1 (clathrin adapter protein complex 1) or possibly Src family kinase-ZAP70/Syk-PI3K cascade recruited by PACS2. In consequence infected cells are masked for immune recognition by cytotoxic T-lymphocytes. Decreasing the number of immune receptors also prevents reinfection by more HIV particles (superinfection). Down-regulates host SERINC3 and SERINC5 thereby excluding these proteins from the viral particles. Virion infectivity is drastically higher when SERINC3 or SERINC5 are excluded from the viral envelope, because these host antiviral proteins impair the membrane fusion event necessary for subsequent virion penetration. Bypasses host T-cell signaling by inducing a transcriptional program nearly identical to that of anti-CD3 cell activation. Interaction with TCR-zeta chain up-regulates the Fas ligand (FasL). Increasing surface FasL molecules and decreasing surface MHC-I molecules on infected CD4(+) cells send attacking cytotoxic CD8+ T-lymphocytes into apoptosis. Functionally, plays a role in optimizing the host cell environment for viral replication without causing cell death by apoptosis. Protects the infected cells from apoptosis in order to keep them alive until the next virus generation is ready to strike. Inhibits the Fas and TNFR-mediated death signals by blocking MAP3K5/ASK1. Decreases the half-life of TP53, protecting the infected cell against p53-mediated apoptosis. Inhibits the apoptotic signals regulated by the Bcl-2 family proteins through the formation of a Nef/PI3-kinase/PAK2 complex that leads to activation of PAK2 and induces phosphorylation of host BAD. Its function is as follows. Extracellular Nef protein targets CD4(+) T-lymphocytes for apoptosis by interacting with CXCR4 surface receptors. This chain is Protein Nef, found in Human immunodeficiency virus type 1 group O (isolate ANT70) (HIV-1).